Consider the following 504-residue polypeptide: UDP-N-acetylmuramoylalanine--D-glutamate ligase (504 aa).

129 to 135 (GTNGKTT) serves as a coordination point for ATP.

It belongs to the MurCDEF family.

The protein localises to the cytoplasm. It catalyses the reaction UDP-N-acetyl-alpha-D-muramoyl-L-alanine + D-glutamate + ATP = UDP-N-acetyl-alpha-D-muramoyl-L-alanyl-D-glutamate + ADP + phosphate + H(+). It functions in the pathway cell wall biogenesis; peptidoglycan biosynthesis. Its function is as follows. Cell wall formation. Catalyzes the addition of glutamate to the nucleotide precursor UDP-N-acetylmuramoyl-L-alanine (UMA). The sequence is that of UDP-N-acetylmuramoylalanine--D-glutamate ligase from Burkholderia pseudomallei (strain 668).